Consider the following 382-residue polypeptide: Glycerate kinase (382 aa).

Belongs to the glycerate kinase type-1 family.

It catalyses the reaction (R)-glycerate + ATP = (2R)-3-phosphoglycerate + ADP + H(+). In Bacillus subtilis (strain 168), this protein is Glycerate kinase (glxK).